A 148-amino-acid polypeptide reads, in one-letter code: Endoribonuclease YbeY (148 aa).

Positions 113, 117, and 123 each coordinate Zn(2+).

It belongs to the endoribonuclease YbeY family. Zn(2+) serves as cofactor.

It localises to the cytoplasm. Its function is as follows. Single strand-specific metallo-endoribonuclease involved in late-stage 70S ribosome quality control and in maturation of the 3' terminus of the 16S rRNA. The polypeptide is Endoribonuclease YbeY (Borrelia turicatae (strain 91E135)).